The primary structure comprises 390 residues: Ribonuclease D (390 aa).

One can recognise a 3'-5' exonuclease domain in the interval 7 to 173; that stretch reads ITDSATLAAL…TLFPMLLKEL (167 aa). The HRDC domain maps to 212-293; the sequence is KADILGRLKA…ENAEALRPEE (82 aa).

It belongs to the RNase D family. A divalent metal cation is required as a cofactor.

It is found in the cytoplasm. The enzyme catalyses Exonucleolytic cleavage that removes extra residues from the 3'-terminus of tRNA to produce 5'-mononucleotides.. Exonuclease involved in the 3' processing of various precursor tRNAs. Initiates hydrolysis at the 3'-terminus of an RNA molecule and releases 5'-mononucleotides. This is Ribonuclease D from Zymomonas mobilis subsp. mobilis (strain ATCC 31821 / ZM4 / CP4).